The sequence spans 457 residues: Multidrug resistance protein MdtK (457 aa).

Transmembrane regions (helical) follow at residues 11–31, 53–73, 93–113, 127–147, 160–180, 189–209, 243–263, 276–296, 314–334, 350–370, 387–407, and 418–438; these read LLALAIPVILAQIAQTAMGFV, IWLPAILFGHGLLLALTPVIA, WLAGFVSVLIMLVLWNAGYII, AVGYLRALLWGAPGYLFFQVA, GMVMGFIGLLVNIPVNYIFIY, GGVGCGVATAAVYWVMFLAMV, LPIALALFFEVTLFAVVALLV, IALNFSSLMFVLPMSLAAAVT, AARTGLMVGVCMATLTAIFTV, VVTLAAHLMLLAAVYQISDSI, IFYITFTAYWVLGLPSGYILA, and PAGFWIGFIIGLTSAAIMMML.

It belongs to the multi antimicrobial extrusion (MATE) (TC 2.A.66.1) family. MdtK subfamily.

It localises to the cell inner membrane. Functionally, multidrug efflux pump that functions probably as a Na(+)/drug antiporter. This is Multidrug resistance protein MdtK from Escherichia coli O139:H28 (strain E24377A / ETEC).